A 196-amino-acid chain; its full sequence is SERTA domain-containing protein 3 (196 aa).

The segment at 1–21 (MVGGLKRKHSDLEEEEERWEW) is disordered. The SERTA domain maps to 26 to 73 (LQSYQQALLRISLDKVQRSLGPRAPSLRRHVLIHNTLQQLQAALRLAP). Residues 104-125 (TSMDGTEPPQNPVTPLGLQNEV) are disordered.

As to quaternary structure, interacts with RPA2. In terms of assembly, (Microbial infection) Interacts with influenza virus PA, PB1 and PB2,leading to inhibition of RdRp complex assembly. (Microbial infection) Interacts with zika virus capsid protein.

Its subcellular location is the nucleus. In terms of biological role, antiviral interferon-stimulated protein that plays a role in innate immunity and in the suppression of viruses through different mechanisms. Plays a role in the late phase response of TLR-induced immune effector expression. During influenza infection, interacts with PB2, PB1, and PA to disrupt the formation of the viral RdRp complex. Inhibits zika virus by interacting with the capsid protein in the nucleolus and reducing its abundance through proteasomal degradation. Strong transcriptional coactivator. The sequence is that of SERTA domain-containing protein 3 (SERTAD3) from Homo sapiens (Human).